The primary structure comprises 663 residues: tRNA (guanine(26)-N(2))-dimethyltransferase (663 aa).

The transit peptide at 1 to 16 (MSLARTILWLSRPLRP) directs the protein to the mitochondrion. One can recognise a Trm1 methyltransferase domain in the interval 56-498 (ATVTEGAAKI…APPEALWDIM (443 aa)). An S-adenosyl-L-methionine-binding site is contributed by Arg83. Ser121 bears the Phosphoserine mark. The S-adenosyl-L-methionine site is built by Arg165 and Asp183. 4 residues coordinate Zn(2+): Cys347, Cys350, Cys383, and Cys386. Ser516 carries the post-translational modification Phosphoserine. A disordered region spans residues 534 to 574 (IREDANPSSRQRGLKRFQANPEANWGPRPRARPGGKAASED). Residues 540–572 (PSSRQRGLKRFQANPEANWGPRPRARPGGKAAS) carry the Nuclear localization signal motif. Residues 599–626 (RLKTFPCKRFKEGTCQLGDQCCYSHSPA) form a C3H1-type zinc finger. Phosphoserine is present on Ser624. The interval 632–663 (GDIPIEECPETTTKISPGPKAAAGGIPGPGVD) is disordered.

The protein belongs to the class I-like SAM-binding methyltransferase superfamily. Trm1 family.

Its subcellular location is the mitochondrion. The protein localises to the nucleus. It localises to the cytoplasm. It catalyses the reaction guanosine(26) in tRNA + 2 S-adenosyl-L-methionine = N(2)-dimethylguanosine(26) in tRNA + 2 S-adenosyl-L-homocysteine + 2 H(+). Dimethylates a single guanine residue at position 26 of most nuclear- and mitochondrial-encoded tRNAs using S-adenosyl-L-methionine as donor of the methyl groups. tRNA guanine(26)-dimethylation is required for redox homeostasis and ensure proper cellular proliferation and oxidative stress survival. The sequence is that of tRNA (guanine(26)-N(2))-dimethyltransferase from Mus musculus (Mouse).